We begin with the raw amino-acid sequence, 156 residues long: Small ribosomal subunit protein uS7 (156 aa).

This sequence belongs to the universal ribosomal protein uS7 family. In terms of assembly, part of the 30S ribosomal subunit. Contacts proteins S9 and S11.

One of the primary rRNA binding proteins, it binds directly to 16S rRNA where it nucleates assembly of the head domain of the 30S subunit. Is located at the subunit interface close to the decoding center, probably blocks exit of the E-site tRNA. This Streptococcus pyogenes serotype M3 (strain ATCC BAA-595 / MGAS315) protein is Small ribosomal subunit protein uS7.